A 71-amino-acid chain; its full sequence is Large ribosomal subunit protein bL31 (71 aa).

Cys16, Cys18, Cys38, and Cys41 together coordinate Zn(2+).

Belongs to the bacterial ribosomal protein bL31 family. Type A subfamily. Part of the 50S ribosomal subunit. Zn(2+) is required as a cofactor.

In terms of biological role, binds the 23S rRNA. The sequence is that of Large ribosomal subunit protein bL31 from Laribacter hongkongensis (strain HLHK9).